The sequence spans 1465 residues: Myomesin-2 (1465 aa).

The disordered stretch occupies residues 38–61 (ASTQASSQKSLSQRSSSQRASSQT). Residues 41-61 (QASSQKSLSQRSSSQRASSQT) show a composition bias toward low complexity. Ig-like C2-type domains follow at residues 154–245 (PEIL…AAVV) and 266–371 (PLSS…AFLF). Fibronectin type-III domains are found at residues 385–480 (APMD…ALDP), 513–608 (PPTG…AQDV), 614–707 (APGR…VQAA), 710–812 (VPSH…TMPE), and 815–912 (PAYD…ARPG). Ig-like C2-type domains follow at residues 904–1002 (PVLV…EELE), 1130–1211 (PHFA…QDVS), and 1345–1434 (RLIG…VTVS). The segment at 1442-1465 (IPDMAPPQQAKPKLIPASASAAGQ) is disordered.

In terms of assembly, interacts with TTN/titin.

It localises to the cytoplasm. The protein resides in the myofibril. Its subcellular location is the sarcomere. The protein localises to the m line. In terms of biological role, major component of the vertebrate myofibrillar M band. Binds myosin, titin, and light meromyosin. This binding is dose dependent. This chain is Myomesin-2 (MYOM2), found in Homo sapiens (Human).